The primary structure comprises 447 residues: N-succinylarginine dihydrolase (447 aa).

Residues 19-28 (AGLSFGNEAS), asparagine 110, and 137-138 (HR) each bind substrate. Glutamate 174 is a catalytic residue. A substrate-binding site is contributed by arginine 212. Histidine 248 is a catalytic residue. Substrate is bound by residues aspartate 250 and asparagine 359. Cysteine 365 functions as the Nucleophile in the catalytic mechanism.

It belongs to the succinylarginine dihydrolase family. In terms of assembly, homodimer.

The enzyme catalyses N(2)-succinyl-L-arginine + 2 H2O + 2 H(+) = N(2)-succinyl-L-ornithine + 2 NH4(+) + CO2. It participates in amino-acid degradation; L-arginine degradation via AST pathway; L-glutamate and succinate from L-arginine: step 2/5. Catalyzes the hydrolysis of N(2)-succinylarginine into N(2)-succinylornithine, ammonia and CO(2). In Escherichia coli (strain SE11), this protein is N-succinylarginine dihydrolase.